The chain runs to 1068 residues: Protein AF-10 (1068 aa).

The segment at 22–74 (IGGCCVCSDERGWAENPLVYCDGHGCSVAVHQACYGIVQVPTGPWFCRKCESQ) adopts a PHD-type 1 zinc-finger fold. The C2HC pre-PHD-type zinc finger occupies 79 to 112 (RVRCELCPHKDGALKRTDNGGWAHVVCALYIPEV). The tract at residues 106–190 (ALYIPEVQFA…EGNGADNVQY (85 aa)) is required for interaction with histone H3. A PHD-type 2 zinc finger spans residues 135 to 198 (KTCYICDEQG…QYCGYCKYHF (64 aa)). Residues 207–260 (GSNRSYEQSLSDSSSHSQDKHHEKEKKKYKEKDKHKQKHKKQPEPSPALVPSLT) are disordered. Serine 217 is modified (phosphoserine). The span at 223–240 (SQDKHHEKEKKKYKEKDK) shows a compositional bias: basic and acidic residues. Serine 252 is modified (phosphoserine). Lysine 280 is covalently cross-linked (Glycyl lysine isopeptide (Lys-Gly) (interchain with G-Cter in SUMO2)). Residues 296 to 305 (EVSAHTSSGK) are compositionally biased toward polar residues. Disordered regions lie at residues 296–416 (EVSA…SFSS) and 428–506 (SQPK…SVAS). Basic and acidic residues predominate over residues 306 to 317 (DVSEARGSEGKG). The span at 340 to 351 (TAVSASSPFPQG) shows a compositional bias: polar residues. Positions 352–372 (SFSGTPGSVKSSSGSSVQSPQ) are enriched in low complexity. Polar residues-rich tracts occupy residues 387–396 (YTHTQQPSST), 404–416 (SGSQ…SFSS), and 428–446 (SQPK…SSLP). A Phosphoserine modification is found at serine 436. The segment covering 465–483 (EKKRKGNKQSKHGPGRPKG) has biased composition (basic residues). Over residues 490 to 506 (VSHLSVSSASPTSSVAS) the composition is skewed to low complexity. Residue serine 532 is modified to Phosphoserine. The span at 583–594 (SGSGSSTPVSSS) shows a compositional bias: low complexity. Disordered stretches follow at residues 583–613 (SGSG…LSPS) and 660–698 (SESS…NLQL). Residues 595–604 (HIPQQSSGHL) are compositionally biased toward polar residues. Low complexity predominate over residues 681 to 692 (SSPRGSLSPRSP). Residues serine 686, serine 688, and serine 691 each carry the phosphoserine modification. The interval 752–780 (LQVENRRLEEQIKNLTAKKERLQLLNAQL) is leucine-zipper. Disordered regions lie at residues 786–869 (AITT…VSGV) and 1040–1068 (PFLT…QEKS). The segment covering 787–816 (ITTNPSPSHQMHTYTAQTAPPPDSLNSSKS) has biased composition (polar residues). Composition is skewed to low complexity over residues 836-850 (LTSS…SALS) and 857-869 (QSPA…VSGV). The span at 1040 to 1054 (PFLTIHGDSTSQKVT) shows a compositional bias: polar residues.

Self-associates. Interacts with FSTL3; the interaction enhances MLLT10 in vitro transcriptional activity and self-association. Interacts with YEATS4. Interacts with SS18. Interacts with DOT1L. Interacts with histone H3; interaction is necessary for MLLT10 binding to nucleosomes; interaction is inhibited by histone H3 'Lys-27' methylations (H3K27me1, H3K27me2 and H3K27me3) amd acetylation; interaction stabilizes association of MLLT10 at chromatin; interaction is essential for histone H3 'Lys-79' dimethylation (H3K79me2).

Its subcellular location is the nucleus. Its function is as follows. Probably involved in transcriptional regulation. Binds to cruciform DNA. In cells, binding to unmodified histone H3 regulates DOT1L functions including histone H3 'Lys-79' dimethylation (H3K79me2) and gene activation. This is Protein AF-10 from Mus musculus (Mouse).